Consider the following 183-residue polypeptide: Threonylcarbamoyl-AMP synthase (183 aa).

A YrdC-like domain is found at 1 to 183 (MNFTEIAEKL…LLTDQLIREG (183 aa)).

Belongs to the SUA5 family. TsaC subfamily.

The protein resides in the cytoplasm. It carries out the reaction L-threonine + hydrogencarbonate + ATP = L-threonylcarbamoyladenylate + diphosphate + H2O. Required for the formation of a threonylcarbamoyl group on adenosine at position 37 (t(6)A37) in tRNAs that read codons beginning with adenine. Catalyzes the conversion of L-threonine, HCO(3)(-)/CO(2) and ATP to give threonylcarbamoyl-AMP (TC-AMP) as the acyladenylate intermediate, with the release of diphosphate. The protein is Threonylcarbamoyl-AMP synthase of Actinobacillus succinogenes (strain ATCC 55618 / DSM 22257 / CCUG 43843 / 130Z).